Reading from the N-terminus, the 201-residue chain is UPF0098 protein MT1961 (201 aa).

Residues T125 to Y146 form a disordered region.

This sequence belongs to the UPF0098 family.

This chain is UPF0098 protein MT1961, found in Mycobacterium tuberculosis (strain CDC 1551 / Oshkosh).